Here is a 151-residue protein sequence, read N- to C-terminus: Ribosome maturation factor RimP (151 aa).

The protein belongs to the RimP family.

The protein localises to the cytoplasm. Required for maturation of 30S ribosomal subunits. The protein is Ribosome maturation factor RimP of Vibrio campbellii (strain ATCC BAA-1116).